Here is a 470-residue protein sequence, read N- to C-terminus: Na(+)-translocating NADH-quinone reductase subunit A (470 aa).

It belongs to the NqrA family. In terms of assembly, composed of six subunits; NqrA, NqrB, NqrC, NqrD, NqrE and NqrF.

It catalyses the reaction a ubiquinone + n Na(+)(in) + NADH + H(+) = a ubiquinol + n Na(+)(out) + NAD(+). NQR complex catalyzes the reduction of ubiquinone-1 to ubiquinol by two successive reactions, coupled with the transport of Na(+) ions from the cytoplasm to the periplasm. NqrA to NqrE are probably involved in the second step, the conversion of ubisemiquinone to ubiquinol. This chain is Na(+)-translocating NADH-quinone reductase subunit A, found in Chlamydia caviae (strain ATCC VR-813 / DSM 19441 / 03DC25 / GPIC) (Chlamydophila caviae).